A 259-amino-acid polypeptide reads, in one-letter code: Protein-L-isoaspartate O-methyltransferase 1 (259 aa).

Residue S109 is part of the active site.

Belongs to the methyltransferase superfamily. L-isoaspartyl/D-aspartyl protein methyltransferase family.

It is found in the cytoplasm. It carries out the reaction [protein]-L-isoaspartate + S-adenosyl-L-methionine = [protein]-L-isoaspartate alpha-methyl ester + S-adenosyl-L-homocysteine. In terms of biological role, catalyzes the methyl esterification of L-isoaspartyl residues in peptides and proteins that result from spontaneous decomposition of normal L-aspartyl and L-asparaginyl residues. It plays a role in the repair and/or degradation of damaged proteins. In Cupriavidus necator (strain ATCC 17699 / DSM 428 / KCTC 22496 / NCIMB 10442 / H16 / Stanier 337) (Ralstonia eutropha), this protein is Protein-L-isoaspartate O-methyltransferase 1.